Reading from the N-terminus, the 259-residue chain is GTP cyclohydrolase FolE2 (259 aa).

It belongs to the GTP cyclohydrolase IV family.

It carries out the reaction GTP + H2O = 7,8-dihydroneopterin 3'-triphosphate + formate + H(+). The protein operates within cofactor biosynthesis; 7,8-dihydroneopterin triphosphate biosynthesis; 7,8-dihydroneopterin triphosphate from GTP: step 1/1. Functionally, converts GTP to 7,8-dihydroneopterin triphosphate. The protein is GTP cyclohydrolase FolE2 of Thermotoga neapolitana (strain ATCC 49049 / DSM 4359 / NBRC 107923 / NS-E).